A 291-amino-acid chain; its full sequence is G1/S-specific cyclin-D1 (291 aa).

The residue at position 282 (T282) is a Phosphothreonine.

It belongs to the cyclin family. Cyclin D subfamily. In terms of assembly, interacts with the cdk4 and cdk6 protein kinases to form a serine/threonine kinase holoenzyme complex. The cyclin subunit imparts substrate specificity to the complex. Post-translationally, phosphorylation at Thr-282 by MAP kinases is required for ubiquitination and degradation by the DCX(AMBRA1) complex. In terms of processing, ubiquitinated by the DCX(AMBRA1) complex during the transition from G1 to S cell phase, leading to its degradation. The DCX(AMBRA1) complex represents the major regulator of CCND1 stability during the G1/S transition.

Its subcellular location is the nucleus. The protein localises to the cytoplasm. Regulatory component of the cyclin D1-CDK4 (DC) complex that phosphorylates and inhibits members of the retinoblastoma (RB) protein family including RB1 and regulates the cell-cycle during G(1)/S transition. Phosphorylation of RB1 allows dissociation of the transcription factor E2F from the RB/E2F complex and the subsequent transcription of E2F target genes which are responsible for the progression through the G(1) phase. Hypophosphorylates RB1 in early G(1) phase. Cyclin D-CDK4 complexes are major integrators of various mitogenenic and antimitogenic signals. The chain is G1/S-specific cyclin-D1 (ccnd1) from Xenopus laevis (African clawed frog).